Consider the following 412-residue polypeptide: Kelch repeat-containing protein At1g19470 (412 aa).

Positions methionine 1–serine 55 are disordered. The segment covering aspartate 16 to leucine 26 has biased composition (basic and acidic residues). 4 Kelch repeats span residues glutamate 156 to glycine 202, lysine 203 to alanine 250, lysine 255 to threonine 291, and cysteine 292 to asparagine 345.

This is Kelch repeat-containing protein At1g19470 from Arabidopsis thaliana (Mouse-ear cress).